We begin with the raw amino-acid sequence, 418 residues long: S-adenosylmethionine synthase (418 aa).

Residue histidine 16 coordinates ATP. Aspartate 18 provides a ligand contact to Mg(2+). K(+) is bound at residue glutamate 44. 2 residues coordinate L-methionine: glutamate 57 and glutamine 100. Residues 100–110 (QSPDIAQGVDS) form a flexible loop region. ATP is bound by residues 174 to 176 (DGK), aspartate 259, 265 to 266 (RK), alanine 282, and lysine 286. L-methionine is bound at residue aspartate 259. Lysine 290 contributes to the L-methionine binding site.

The protein belongs to the AdoMet synthase family. In terms of assembly, homotetramer; dimer of dimers. It depends on Mg(2+) as a cofactor. The cofactor is K(+).

It is found in the cytoplasm. It catalyses the reaction L-methionine + ATP + H2O = S-adenosyl-L-methionine + phosphate + diphosphate. It participates in amino-acid biosynthesis; S-adenosyl-L-methionine biosynthesis; S-adenosyl-L-methionine from L-methionine: step 1/1. In terms of biological role, catalyzes the formation of S-adenosylmethionine (AdoMet) from methionine and ATP. The overall synthetic reaction is composed of two sequential steps, AdoMet formation and the subsequent tripolyphosphate hydrolysis which occurs prior to release of AdoMet from the enzyme. The protein is S-adenosylmethionine synthase of Acaryochloris marina (strain MBIC 11017).